The following is a 62-amino-acid chain: Large ribosomal subunit protein bL32 (62 aa).

The protein belongs to the bacterial ribosomal protein bL32 family.

The polypeptide is Large ribosomal subunit protein bL32 (Levilactobacillus brevis (strain ATCC 367 / BCRC 12310 / CIP 105137 / JCM 1170 / LMG 11437 / NCIMB 947 / NCTC 947) (Lactobacillus brevis)).